A 103-amino-acid polypeptide reads, in one-letter code: Large ribosomal subunit protein bL21 (103 aa).

It belongs to the bacterial ribosomal protein bL21 family. In terms of assembly, part of the 50S ribosomal subunit. Contacts protein L20.

In terms of biological role, this protein binds to 23S rRNA in the presence of protein L20. This chain is Large ribosomal subunit protein bL21, found in Shewanella putrefaciens (strain CN-32 / ATCC BAA-453).